The chain runs to 241 residues: tRNA (guanine-N(7)-)-methyltransferase (241 aa).

A disordered region spans residues methionine 1–arginine 20. Residues glutamate 71, glutamate 96, aspartate 123, and aspartate 146 each coordinate S-adenosyl-L-methionine. Residue aspartate 146 is part of the active site. Residues lysine 150, aspartate 182, and threonine 219 to glutamate 222 contribute to the substrate site.

The protein belongs to the class I-like SAM-binding methyltransferase superfamily. TrmB family.

The enzyme catalyses guanosine(46) in tRNA + S-adenosyl-L-methionine = N(7)-methylguanosine(46) in tRNA + S-adenosyl-L-homocysteine. It functions in the pathway tRNA modification; N(7)-methylguanine-tRNA biosynthesis. Functionally, catalyzes the formation of N(7)-methylguanine at position 46 (m7G46) in tRNA. The protein is tRNA (guanine-N(7)-)-methyltransferase of Pseudomonas fluorescens (strain ATCC BAA-477 / NRRL B-23932 / Pf-5).